A 76-amino-acid chain; its full sequence is MRRERGRRARRRVCSFCVDKIEHVDYKDAARLKRYITERGKILPRRISGNCARHQRQLTVAIKRARIMALLPFTVE.

This sequence belongs to the bacterial ribosomal protein bS18 family. In terms of assembly, part of the 30S ribosomal subunit. Forms a tight heterodimer with protein bS6.

Its function is as follows. Binds as a heterodimer with protein bS6 to the central domain of the 16S rRNA, where it helps stabilize the platform of the 30S subunit. This is Small ribosomal subunit protein bS18 from Symbiobacterium thermophilum (strain DSM 24528 / JCM 14929 / IAM 14863 / T).